A 147-amino-acid chain; its full sequence is D-aminoacyl-tRNA deacylase (147 aa).

Positions 136–137 (GP) match the Gly-cisPro motif, important for rejection of L-amino acids motif.

It belongs to the DTD family. As to quaternary structure, homodimer.

The protein localises to the cytoplasm. It carries out the reaction glycyl-tRNA(Ala) + H2O = tRNA(Ala) + glycine + H(+). The catalysed reaction is a D-aminoacyl-tRNA + H2O = a tRNA + a D-alpha-amino acid + H(+). In terms of biological role, an aminoacyl-tRNA editing enzyme that deacylates mischarged D-aminoacyl-tRNAs. Also deacylates mischarged glycyl-tRNA(Ala), protecting cells against glycine mischarging by AlaRS. Acts via tRNA-based rather than protein-based catalysis; rejects L-amino acids rather than detecting D-amino acids in the active site. By recycling D-aminoacyl-tRNA to D-amino acids and free tRNA molecules, this enzyme counteracts the toxicity associated with the formation of D-aminoacyl-tRNA entities in vivo and helps enforce protein L-homochirality. In Nitratiruptor sp. (strain SB155-2), this protein is D-aminoacyl-tRNA deacylase.